The chain runs to 875 residues: Valine--tRNA ligase (875 aa).

A 'HIGH' region motif is present at residues 45 to 55 (PNVTGVLHMGH). The short motif at 524–528 (KMSKS) is the 'KMSKS' region element. An ATP-binding site is contributed by Lys527. A coiled-coil region spans residues 803-837 (VKSLIDKTKELIRLEKQLEKYKMLNISVSKKLENE).

This sequence belongs to the class-I aminoacyl-tRNA synthetase family. ValS type 1 subfamily. Monomer.

Its subcellular location is the cytoplasm. It carries out the reaction tRNA(Val) + L-valine + ATP = L-valyl-tRNA(Val) + AMP + diphosphate. Catalyzes the attachment of valine to tRNA(Val). As ValRS can inadvertently accommodate and process structurally similar amino acids such as threonine, to avoid such errors, it has a 'posttransfer' editing activity that hydrolyzes mischarged Thr-tRNA(Val) in a tRNA-dependent manner. This chain is Valine--tRNA ligase, found in Borreliella burgdorferi (strain ATCC 35210 / DSM 4680 / CIP 102532 / B31) (Borrelia burgdorferi).